The primary structure comprises 135 residues: DNA-directed RNA polymerase subunit omega (135 aa).

It belongs to the RNA polymerase subunit omega family. In terms of assembly, the RNAP catalytic core consists of 2 alpha, 1 beta, 1 beta' and 1 omega subunit. When a sigma factor is associated with the core the holoenzyme is formed, which can initiate transcription.

It carries out the reaction RNA(n) + a ribonucleoside 5'-triphosphate = RNA(n+1) + diphosphate. Its function is as follows. Promotes RNA polymerase assembly. Latches the N- and C-terminal regions of the beta' subunit thereby facilitating its interaction with the beta and alpha subunits. The chain is DNA-directed RNA polymerase subunit omega from Sinorhizobium medicae (strain WSM419) (Ensifer medicae).